Reading from the N-terminus, the 578-residue chain is Proline--tRNA ligase (578 aa).

This sequence belongs to the class-II aminoacyl-tRNA synthetase family. ProS type 1 subfamily. In terms of assembly, homodimer.

The protein localises to the cytoplasm. It catalyses the reaction tRNA(Pro) + L-proline + ATP = L-prolyl-tRNA(Pro) + AMP + diphosphate. Catalyzes the attachment of proline to tRNA(Pro) in a two-step reaction: proline is first activated by ATP to form Pro-AMP and then transferred to the acceptor end of tRNA(Pro). As ProRS can inadvertently accommodate and process non-cognate amino acids such as alanine and cysteine, to avoid such errors it has two additional distinct editing activities against alanine. One activity is designated as 'pretransfer' editing and involves the tRNA(Pro)-independent hydrolysis of activated Ala-AMP. The other activity is designated 'posttransfer' editing and involves deacylation of mischarged Ala-tRNA(Pro). The misacylated Cys-tRNA(Pro) is not edited by ProRS. This is Proline--tRNA ligase from Burkholderia lata (strain ATCC 17760 / DSM 23089 / LMG 22485 / NCIMB 9086 / R18194 / 383).